Consider the following 388-residue polypeptide: Purple acid phosphatase 19 (388 aa).

The N-terminal stretch at 1 to 24 is a signal peptide; sequence MGLNHLTLVCSAIALLSIFVVSQA. 2 N-linked (GlcNAc...) asparagine glycosylation sites follow: Asn97 and Asn111. Residues Asp145 and Tyr148 each coordinate Fe cation. Asp145 lines the Zn(2+) pocket. Asn182 contacts Zn(2+). Residue Asn182 participates in substrate binding. The N-linked (GlcNAc...) asparagine glycan is linked to Asn226. Residue His238 coordinates Zn(2+). The active-site Proton donor is the His248. His275 contributes to the Zn(2+) binding site. 275 to 277 is a substrate binding site; sequence HVH. Residue His277 coordinates Fe cation. N-linked (GlcNAc...) asparagine glycosylation is found at Asn291 and Asn348.

Belongs to the metallophosphoesterase superfamily. Purple acid phosphatase family. Homodimer. Fe cation serves as cofactor. Zn(2+) is required as a cofactor. Specifically expressed in flowers.

The protein localises to the secreted. The catalysed reaction is a phosphate monoester + H2O = an alcohol + phosphate. The polypeptide is Purple acid phosphatase 19 (PAP19) (Arabidopsis thaliana (Mouse-ear cress)).